The primary structure comprises 208 residues: MKIVEVKHPLVKHKLGLMRVADITTKDFRELATEVGSLLTYEATSDLETEKVIIDGWCGAVEIDRIKGKKVTVVPILRAGLGMMDGVLEHVPSARISVVGMYRDEETLEPVPYFQKLASDLDERLAIVVDPMLATGGSMIATINLLKAKGCQHIKVLVLVAAPEGIKALEAVHPDVELYTASIDSHLNEHGYIIPGLGDAGDKIFGTK.

5-phospho-alpha-D-ribose 1-diphosphate is bound by residues Arg-78, Arg-103, and 130–138 (DPMLATGGS). Residues Ile-193 and 198–200 (GDA) each bind uracil. A 5-phospho-alpha-D-ribose 1-diphosphate-binding site is contributed by Asp-199.

Belongs to the UPRTase family. Requires Mg(2+) as cofactor.

It catalyses the reaction UMP + diphosphate = 5-phospho-alpha-D-ribose 1-diphosphate + uracil. It participates in pyrimidine metabolism; UMP biosynthesis via salvage pathway; UMP from uracil: step 1/1. Its activity is regulated as follows. Allosterically activated by GTP. Functionally, catalyzes the conversion of uracil and 5-phospho-alpha-D-ribose 1-diphosphate (PRPP) to UMP and diphosphate. The chain is Uracil phosphoribosyltransferase from Histophilus somni (strain 129Pt) (Haemophilus somnus).